A 231-amino-acid chain; its full sequence is ATP phosphoribosyltransferase (231 aa).

It belongs to the ATP phosphoribosyltransferase family. Short subfamily. In terms of assembly, heteromultimer composed of HisG and HisZ subunits.

The protein resides in the cytoplasm. The catalysed reaction is 1-(5-phospho-beta-D-ribosyl)-ATP + diphosphate = 5-phospho-alpha-D-ribose 1-diphosphate + ATP. It participates in amino-acid biosynthesis; L-histidine biosynthesis; L-histidine from 5-phospho-alpha-D-ribose 1-diphosphate: step 1/9. In terms of biological role, catalyzes the condensation of ATP and 5-phosphoribose 1-diphosphate to form N'-(5'-phosphoribosyl)-ATP (PR-ATP). Has a crucial role in the pathway because the rate of histidine biosynthesis seems to be controlled primarily by regulation of HisG enzymatic activity. This chain is ATP phosphoribosyltransferase (hisG), found in Sinorhizobium fredii (strain NBRC 101917 / NGR234).